The primary structure comprises 349 residues: Protein RecA (349 aa).

65–72 (GPESSGKT) provides a ligand contact to ATP.

It belongs to the RecA family.

It localises to the cytoplasm. In terms of biological role, can catalyze the hydrolysis of ATP in the presence of single-stranded DNA, the ATP-dependent uptake of single-stranded DNA by duplex DNA, and the ATP-dependent hybridization of homologous single-stranded DNAs. It interacts with LexA causing its activation and leading to its autocatalytic cleavage. This Vibrio vulnificus (strain CMCP6) protein is Protein RecA.